Consider the following 932-residue polypeptide: MTNCLSFRNGRGLALLCALLGTLCETGSGQIRYSVSEELDKGSFVGNIANDLGLEPRELAERGVRIVSRGRTQLFSLNPQSGSLVTAERIDREELCAQIPLCLVKFNILVEDKLKIFEVEIEIKDINDNAPNFPTEELEIKIGELTVPGTRFPLKTAFDPDVGINSLQNYKLSPNDYFSLAVNSVSEGAKYPELVLERALDREKREIHQLVLVASDGGDPVHSGNLHIQVIVLDANDNPPMFTQPEYRVSVWENVPVGTRLLTVNATDPDEGFNAQVSYILDKMPGKIAEIFHLNSVSGEVSILKSLDYEDAMFYEIKIEAQDGPGLLSRAKILVTVLDVNDNAPEITITSLTSSVPEEGTVGREIALIDVHDRDSGQNGQVEVFVLGNLPFKLEKSVDQYYRLVTATSLDREQISEYNISLRASDGGSPPLSTETHITLHVIDINDNPPTFPHLSYSAYIPENNPRGASIFSVTAQDPDSNNNARITYALTEDTLQGAPLSSFVSINSNTGVLYALRSFDYEQFRDLKLLVTASDSGNPPLSSNVSLNLFVLDQNDNAPEILYPALPTDGSTGVELAPRSAEPGYLVTKVVAVDRDSGQNAWLSYRLLKASEPGLFSVGLHTGEVRTARALLDRDALKQSLVVAVQDHGQPPLSATVTLTVAVADRIPDILADLGSLEPSAKPNDSDLTLYLVVAVAAVSCVFLALVIVLLAHRLRRWHKSRLLQASGGGLASTPGSHFVGVDGVRAFLQTYSHEVSLTADSRKSHLIFPQPNYADTLISQESCEKSEPLLITQDLLEMKGDSNLLQQAPPNTDWRFSQAQRPGTSGSQNGDDTGTWPNNQFDTEMLQAMILASASEAADGSSTLGGGAGTMGLSARYGPQFTLQHVPDYRQNVYIPGSNATLTNAAGKRDGKAPAGGNGNKKKSGKKEKK.

An N-terminal signal peptide occupies residues Met-1–Gly-29. Cadherin domains lie at Gln-30–Phe-133, Pro-134–Phe-242, Thr-243–Ile-347, Thr-348–Phe-452, Pro-453–Ile-562, and Asp-570–Ala-682. Residues Gln-30 to Tyr-692 are Extracellular-facing. Residues Asn-265, Asn-419, and Asn-545 are each glycosylated (N-linked (GlcNAc...) asparagine). A glycan (N-linked (GlcNAc...) asparagine) is linked at Asn-685. A helical transmembrane segment spans residues Leu-693–Ala-713. The Cytoplasmic segment spans residues His-714–Lys-932. Disordered regions lie at residues Leu-806 to Asn-841 and Ala-902 to Lys-932. Residues Asn-922 to Lys-932 are compositionally biased toward basic residues.

It localises to the cell membrane. Potential calcium-dependent cell-adhesion protein. May be involved in the establishment and maintenance of specific neuronal connections in the brain. In Pan troglodytes (Chimpanzee), this protein is Protocadherin gamma-A3 (PCDHGA3).